The chain runs to 225 residues: DNA-binding response regulator MtrA (225 aa).

The Response regulatory domain occupies 4-117 (RILVVDDDAS…ELVARVRARL (114 aa)). At Asp53 the chain carries 4-aspartylphosphate. The segment at residues 125–224 (AEMLSIADVD…VRGVGYKAGP (100 aa)) is a DNA-binding region (ompR/PhoB-type).

Post-translationally, phosphorylated by MtrB.

In terms of biological role, member of the two-component regulatory system MtrA/MtrB. This is DNA-binding response regulator MtrA (mtrA) from Mycobacterium leprae (strain TN).